A 279-amino-acid chain; its full sequence is Tumor protein p63-regulated gene 1 protein (279 aa).

Positions 1 to 49 (MSTIGSFDGFQPVSLKQEEEDQPSENDHLSTKEGNSGKDPGSRRISRQQ) are disordered. Residues 72-259 (VTRPGAIETA…ILIETYTGLM (188 aa)) enclose the hSac2 domain.

It belongs to the TPRG1 family. In terms of tissue distribution, highly expressed in skin. Also detected at low levels in tongue and esophagus.

The protein resides in the cytoplasm. The chain is Tumor protein p63-regulated gene 1 protein from Mus musculus (Mouse).